The primary structure comprises 139 residues: HTH-type transcriptional regulator MntR (139 aa).

In terms of domain architecture, HTH dtxR-type spans 1–63; the sequence is MPTPSMEDHI…YEKYRGLTLT (63 aa). Mn(2+) contacts are provided by Asp-8, Glu-11, His-77, Glu-99, Glu-102, and His-103.

Belongs to the DtxR/MntR family. Homodimer.

Its subcellular location is the cytoplasm. With respect to regulation, DNA binding is strongly activated by Mn(2+). Its function is as follows. Central regulator of manganese homeostasis. The chain is HTH-type transcriptional regulator MntR from Lysinibacillus sphaericus (strain C3-41).